Consider the following 229-residue polypeptide: Endonuclease NucS (229 aa).

The protein belongs to the NucS endonuclease family.

It localises to the cytoplasm. Its function is as follows. Cleaves both 3' and 5' ssDNA extremities of branched DNA structures. The polypeptide is Endonuclease NucS (Corynebacterium diphtheriae (strain ATCC 700971 / NCTC 13129 / Biotype gravis)).